We begin with the raw amino-acid sequence, 156 residues long: UPF0587 protein (156 aa).

Zn(2+) contacts are provided by Cys-32, Cys-35, Cys-64, and Cys-67.

This sequence belongs to the UPF0587 family.

This chain is UPF0587 protein, found in Dictyostelium discoideum (Social amoeba).